A 463-amino-acid polypeptide reads, in one-letter code: V-type proton ATPase subunit S1 (463 aa).

The N-terminal stretch at 1–32 (MMAATVVSRIRTGTRWAPVLWLLLSLVAVAAA) is a signal peptide. A propeptide spanning residues 33–225 (VAAEQQVPLV…TAVRPSRVAR (193 aa)) is cleaved from the precursor. Over 33–412 (VAAEQQVPLV…EQFSYASDCA (380 aa)) the chain is Lumenal. N-linked (GlcNAc...) asparagine glycosylation is found at N164, N255, N267, N290, N297, N344, N351, and N399. Residues 413–433 (GFFSPGIWMGLLTTLFMLFIF) form a helical membrane-spanning segment. The Cytoplasmic segment spans residues 434–463 (TYGLHMILSLKTMDRFDDRKGPTITLTQIV).

Belongs to the vacuolar ATPase subunit S1 family. In terms of assembly, accessory component of the multisubunit proton-transporting vacuolar (V)-ATPase protein pump. Interacts (via N-terminus) with ATP6AP2 (via N-terminus). Interacts with RNASEK. Interacts with TMEM106B (via C-terminus). N-glycosylated. In terms of tissue distribution, expressed in brain (at protein level).

It is found in the endoplasmic reticulum membrane. The protein resides in the endoplasmic reticulum-Golgi intermediate compartment membrane. The protein localises to the cytoplasmic vesicle. It localises to the secretory vesicle. Its subcellular location is the synaptic vesicle membrane. It is found in the clathrin-coated vesicle membrane. Functionally, accessory subunit of the proton-transporting vacuolar (V)-ATPase protein pump, which is required for luminal acidification of secretory vesicles. Guides the V-type ATPase into specialized subcellular compartments, such as neuroendocrine regulated secretory vesicles or the ruffled border of the osteoclast, thereby regulating its activity. Involved in membrane trafficking and Ca(2+)-dependent membrane fusion. May play a role in the assembly of the V-type ATPase complex. In aerobic conditions, involved in intracellular iron homeostasis, thus triggering the activity of Fe(2+) prolyl hydroxylase (PHD) enzymes, and leading to HIF1A hydroxylation and subsequent proteasomal degradation. In islets of Langerhans cells, may regulate the acidification of dense-core secretory granules. This is V-type proton ATPase subunit S1 (Atp6ap1) from Rattus norvegicus (Rat).